Consider the following 148-residue polypeptide: MARGLRGLPRRGLWLLLVNHLFLATACQDTDHAALLRKYCLPQFQVDMEAIGKALWCDWDKTIGSYKDLSDCTRLVAQRLDCFWPNAAVDKFFLGVHQQYFRNCPVSGRALQDPPSSVLCPFIVVPILATLLMTALVVWRSKRPEGIV.

Positions 1-26 are cleaved as a signal peptide; that stretch reads MARGLRGLPRRGLWLLLVNHLFLATA. Intrachain disulfides connect cysteine 27/cysteine 82, cysteine 40/cysteine 72, and cysteine 57/cysteine 104. Over 27–118 the chain is Extracellular; sequence CQDTDHAALL…RALQDPPSSV (92 aa). Residues 119-140 traverse the membrane as a helical segment; that stretch reads LCPFIVVPILATLLMTALVVWR. Over 141 to 148 the chain is Cytoplasmic; sequence SKRPEGIV.

This sequence belongs to the RAMP family. Heterodimer of CALCRL and RAMP1; the interaction induces allosteric modulation of CALCRL function and CGRP1/CALCA and CGRP2/CALCB ligand specificity. Heterodimer of CALCR and RAMP1; interaction forms the AMYR1 receptor complex for amylin/IAPP and CGRP1/CALCA ligands.

It is found in the cell membrane. Functionally, accessory protein that interacts with and modulates the function of G-protein coupled receptors including calcitonin gene-related peptide type 1 receptor (CALCRL) and calcitonin receptor (CALCR). Required for the transport of CALCRL to the plasma membrane. Together with CALCRL, form the receptor complex for the calcitonin gene-related peptides CGRP1/CALCA and CGRP2/CALCB. Together with CALCR, form the AMYR1 receptor complex for amylin/IAPP and CGRP1/CALCA. The sequence is that of Receptor activity-modifying protein 1 (RAMP1) from Sus scrofa (Pig).